Here is a 230-residue protein sequence, read N- to C-terminus: UPF0173 metal-dependent hydrolase RSKD131_0588 (230 aa).

This sequence belongs to the UPF0173 family.

This Cereibacter sphaeroides (strain KD131 / KCTC 12085) (Rhodobacter sphaeroides) protein is UPF0173 metal-dependent hydrolase RSKD131_0588.